Consider the following 151-residue polypeptide: Transcriptional regulator MraZ (151 aa).

SpoVT-AbrB domains follow at residues 7–53 (EYDC…SQTE) and 82–125 (INEV…SPDL).

Belongs to the MraZ family. In terms of assembly, forms oligomers.

It is found in the cytoplasm. It localises to the nucleoid. In Cytophaga hutchinsonii (strain ATCC 33406 / DSM 1761 / CIP 103989 / NBRC 15051 / NCIMB 9469 / D465), this protein is Transcriptional regulator MraZ.